The sequence spans 107 residues: uncharacterized protein (107 aa).

The chain crosses the membrane as a helical span at residues 62-79; sequence LLVVIVYYFSHVGSFSLA.

The protein localises to the nucleus membrane. This is an uncharacterized protein from Schizosaccharomyces pombe (strain 972 / ATCC 24843) (Fission yeast).